The following is a 229-amino-acid chain: Growth factor receptor-bound protein 2 (229 aa).

SH3 domains are found at residues 1-58 (MEAV…MKPH) and 168-227 (QQPT…PVNR). The SH2 domain occupies 60–171 (WFFGKIPRAK…RATNLLQQPT (112 aa)).

It is found in the nucleus. The protein localises to the cytoplasm. It localises to the endosome. The protein resides in the golgi apparatus. Its function is as follows. Adapter protein that provides a critical link between cell surface growth factor receptors and the Ras signaling pathway. Promotes meiotic reinitiation during oocyte maturation. The polypeptide is Growth factor receptor-bound protein 2 (Xenopus tropicalis (Western clawed frog)).